Consider the following 213-residue polypeptide: Alkylbase DNA glycosidase-like protein mag2 (213 aa).

DNA is bound by residues K53, L54, S61, H91, G94, S96, K97, K99, E102, K137, G138, K140, T143, S163, and T164.

Belongs to the alkylbase DNA glycosidase AlkA family.

It localises to the nucleus. Alkylbase DNA glycosidase-like protein that shows no DNA glycosylase activity for alkylated bases. The molecular role of mag2 appears to be abasic (AP) site recognition and protection, while possibly facilitating damage signaling by structurally sculpting the DNA substrate. Stimulates AP site binding to mismatch repair protein mutS. In Schizosaccharomyces pombe (strain 972 / ATCC 24843) (Fission yeast), this protein is Alkylbase DNA glycosidase-like protein mag2.